A 250-amino-acid chain; its full sequence is Flagellar L-ring protein (250 aa).

Residues 1-32 (MTRINTNTQKNNNTKFSKLILGVMVSSIVLSG) form the signal peptide. Cysteine 33 is lipidated: N-palmitoyl cysteine. Cysteine 33 carries the S-diacylglycerol cysteine lipid modification.

It belongs to the FlgH family. In terms of assembly, the basal body constitutes a major portion of the flagellar organelle and consists of four rings (L,P,S, and M) mounted on a central rod.

It localises to the cell outer membrane. Its subcellular location is the bacterial flagellum basal body. In terms of biological role, assembles around the rod to form the L-ring and probably protects the motor/basal body from shearing forces during rotation. This is Flagellar L-ring protein from Hydrogenovibrio crunogenus (strain DSM 25203 / XCL-2) (Thiomicrospira crunogena).